The sequence spans 407 residues: GTPase Obg (407 aa).

The Obg domain occupies 1–159 (MKFVDEVSIR…RDLKLEMKVL (159 aa)). The disordered stretch occupies residues 128 to 148 (TRFKSSTNRAPRQTTPGKPGE). Polar residues predominate over residues 129–143 (RFKSSTNRAPRQTTP). Residues 160–333 (ADVGLLGLPN…LTRDIMRYLE (174 aa)) form the OBG-type G domain. GTP is bound by residues 166-173 (GLPNAGKS), 191-195 (FTTLV), 213-216 (DIPG), 283-286 (NKCD), and 314-316 (SAI). Mg(2+)-binding residues include Ser173 and Thr193. The disordered stretch occupies residues 376–407 (SGVKSVHDIGDDDWDEEDVDDEDGPEIIYVRD). Acidic residues predominate over residues 385-400 (GDDDWDEEDVDDEDGP).

It belongs to the TRAFAC class OBG-HflX-like GTPase superfamily. OBG GTPase family. In terms of assembly, monomer. Requires Mg(2+) as cofactor.

The protein resides in the cytoplasm. Functionally, an essential GTPase which binds GTP, GDP and possibly (p)ppGpp with moderate affinity, with high nucleotide exchange rates and a fairly low GTP hydrolysis rate. Plays a role in control of the cell cycle, stress response, ribosome biogenesis and in those bacteria that undergo differentiation, in morphogenesis control. This is GTPase Obg from Pseudomonas fluorescens (strain Pf0-1).